The chain runs to 393 residues: S-adenosylmethionine synthase (393 aa).

ATP is bound at residue H16. D18 is a binding site for Mg(2+). E44 is a binding site for K(+). L-methionine contacts are provided by E57 and Q100. Positions Q100–G110 are flexible loop. ATP-binding positions include D165–K167, R231–F232, D240, R246–K247, and K267. D240 contacts L-methionine. An L-methionine-binding site is contributed by K271.

The protein belongs to the AdoMet synthase family. Homotetramer; dimer of dimers. Requires Mg(2+) as cofactor. It depends on K(+) as a cofactor.

The protein localises to the cytoplasm. It carries out the reaction L-methionine + ATP + H2O = S-adenosyl-L-methionine + phosphate + diphosphate. It functions in the pathway amino-acid biosynthesis; S-adenosyl-L-methionine biosynthesis; S-adenosyl-L-methionine from L-methionine: step 1/1. Catalyzes the formation of S-adenosylmethionine (AdoMet) from methionine and ATP. The overall synthetic reaction is composed of two sequential steps, AdoMet formation and the subsequent tripolyphosphate hydrolysis which occurs prior to release of AdoMet from the enzyme. The protein is S-adenosylmethionine synthase of Coxiella burnetii (strain CbuG_Q212) (Coxiella burnetii (strain Q212)).